The following is a 291-amino-acid chain: MSAQENSAPFLRIPPWLRTRIPCNRTYTATRELIGDLNLHTVCQSAKCPNMFECFSSRTATFLILGGTCTRNCAFCNIEPGDVLPPDAGEPQRVALAAARLELKHVVITSVTRDDLPDGGAAHFAATIQAVRSRLPRCTVEVLIPDFQGDAAALQTVLQARPDVLNHNVETPPAHYSRIRPQADYSQSLELLRRARAAGFTVKSGLMTGLGETDAEVLGVIDDLCATGCNIVTVGQYMRPSRRHPAVQRYVHPDMFEEYAAYGRARGIPHMFCAPLVRSSYNASMFVQEKN.

Residues Cys-43, Cys-48, Cys-54, Cys-69, Cys-73, Cys-76, and Ser-280 each coordinate [4Fe-4S] cluster. The Radical SAM core domain occupies 55 to 269 (FSSRTATFLI…AAYGRARGIP (215 aa)).

It belongs to the radical SAM superfamily. Lipoyl synthase family. The cofactor is [4Fe-4S] cluster.

It is found in the cytoplasm. It carries out the reaction [[Fe-S] cluster scaffold protein carrying a second [4Fe-4S](2+) cluster] + N(6)-octanoyl-L-lysyl-[protein] + 2 oxidized [2Fe-2S]-[ferredoxin] + 2 S-adenosyl-L-methionine + 4 H(+) = [[Fe-S] cluster scaffold protein] + N(6)-[(R)-dihydrolipoyl]-L-lysyl-[protein] + 4 Fe(3+) + 2 hydrogen sulfide + 2 5'-deoxyadenosine + 2 L-methionine + 2 reduced [2Fe-2S]-[ferredoxin]. It functions in the pathway protein modification; protein lipoylation via endogenous pathway; protein N(6)-(lipoyl)lysine from octanoyl-[acyl-carrier-protein]: step 2/2. Its function is as follows. Catalyzes the radical-mediated insertion of two sulfur atoms into the C-6 and C-8 positions of the octanoyl moiety bound to the lipoyl domains of lipoate-dependent enzymes, thereby converting the octanoylated domains into lipoylated derivatives. This Oleidesulfovibrio alaskensis (strain ATCC BAA-1058 / DSM 17464 / G20) (Desulfovibrio alaskensis) protein is Lipoyl synthase.